The sequence spans 213 residues: Putative thiamine-phosphate synthase (213 aa).

Residues Q38–K42 and N70 contribute to the 4-amino-2-methyl-5-(diphosphooxymethyl)pyrimidine site. D71 provides a ligand contact to Mg(2+). Position 109 (S109) interacts with 4-amino-2-methyl-5-(diphosphooxymethyl)pyrimidine. T135–S137 contributes to the 2-[(2R,5Z)-2-carboxy-4-methylthiazol-5(2H)-ylidene]ethyl phosphate binding site. Position 138 (K138) interacts with 4-amino-2-methyl-5-(diphosphooxymethyl)pyrimidine. 2-[(2R,5Z)-2-carboxy-4-methylthiazol-5(2H)-ylidene]ethyl phosphate-binding positions include G166 and I186–S187.

The protein belongs to the thiamine-phosphate synthase family. It depends on Mg(2+) as a cofactor.

The enzyme catalyses 2-[(2R,5Z)-2-carboxy-4-methylthiazol-5(2H)-ylidene]ethyl phosphate + 4-amino-2-methyl-5-(diphosphooxymethyl)pyrimidine + 2 H(+) = thiamine phosphate + CO2 + diphosphate. The catalysed reaction is 2-(2-carboxy-4-methylthiazol-5-yl)ethyl phosphate + 4-amino-2-methyl-5-(diphosphooxymethyl)pyrimidine + 2 H(+) = thiamine phosphate + CO2 + diphosphate. It carries out the reaction 4-methyl-5-(2-phosphooxyethyl)-thiazole + 4-amino-2-methyl-5-(diphosphooxymethyl)pyrimidine + H(+) = thiamine phosphate + diphosphate. It participates in cofactor biosynthesis; thiamine diphosphate biosynthesis; thiamine phosphate from 4-amino-2-methyl-5-diphosphomethylpyrimidine and 4-methyl-5-(2-phosphoethyl)-thiazole: step 1/1. Functionally, condenses 4-methyl-5-(beta-hydroxyethyl)thiazole monophosphate (THZ-P) and 2-methyl-4-amino-5-hydroxymethyl pyrimidine pyrophosphate (HMP-PP) to form thiamine monophosphate (TMP). The protein is Putative thiamine-phosphate synthase (thiE) of Geobacter sulfurreducens (strain ATCC 51573 / DSM 12127 / PCA).